The following is a 383-amino-acid chain: MSSSADNSNNSSSRFPAAVDSINNNSNSINDASQFHNSYNEVNEINNDTNSQVNNGNNITFHVLVSLKEAAKIIGPQGNTIETIRRENDIKIGISPREKSCSDRLLNVSGPPRQVANSLGQVLRVLTTDYEPEEHVFKHLRFMLPPASKEEIEDPEKWKQIGNLRLICTNPQISSVIGQQGAKIKKLIETHTVKLVASKHFLPDSKDRVLEIQGFPTSVANCINEIAELFIQDDVHVPPRTLPRYYPHSKHTKEIQVSQTLAIPKEFVGALLGVGGNRIANLRKFTKTKIVIGQDPTENGDRIFTVWGNDQKSVKLAQTMLLKNLEVEKKRREEHEASLKDGSSVPAAAAASAATSISASGANQNDSIHTPVSDNESPVVFTE.

3 KH domains span residues 58-122 (NITF…LGQV), 161-226 (IGNL…INEI), and 256-321 (QVSQ…QTML). The segment at 332-383 (REEHEASLKDGSSVPAAAAASAATSISASGANQNDSIHTPVSDNESPVVFTE) is disordered. Residues 343–362 (SSVPAAAAASAATSISASGA) show a composition bias toward low complexity. Positions 363–376 (NQNDSIHTPVSDNE) are enriched in polar residues.

Belongs to the HEK2 family. Binds RNA.

It localises to the cytoplasm. It is found in the P-body. The protein localises to the nucleus. The protein resides in the chromosome. Its subcellular location is the telomere. RNA-binding protein involved in the correct localization of transcripts in the cell. RNA localization is a widespread mechanism for achieving localized protein synthesis. Involved in structural and functional organization of telomeric chromatin and regulates silencing at the HMR locus. The protein is Heterogeneous nuclear rnp K-like protein 2 (HEK2) of Kluyveromyces lactis (strain ATCC 8585 / CBS 2359 / DSM 70799 / NBRC 1267 / NRRL Y-1140 / WM37) (Yeast).